Consider the following 84-residue polypeptide: Small ribosomal subunit protein bS18 (84 aa).

The protein belongs to the bacterial ribosomal protein bS18 family. Part of the 30S ribosomal subunit. Forms a tight heterodimer with protein bS6.

Functionally, binds as a heterodimer with protein bS6 to the central domain of the 16S rRNA, where it helps stabilize the platform of the 30S subunit. The chain is Small ribosomal subunit protein bS18 from Mycobacterium sp. (strain JLS).